The chain runs to 358 residues: Fructose-bisphosphate aldolase 3, cytoplasmic (358 aa).

Residue Arg39 coordinates substrate. Glu183 acts as the Proton acceptor in catalysis. Residue Lys225 is the Schiff-base intermediate with dihydroxyacetone-P of the active site. Residues 266–268 (SGG) and Arg298 contribute to the substrate site.

The protein belongs to the class I fructose-bisphosphate aldolase family. Homotetramer.

Its subcellular location is the cytoplasm. It localises to the cytosol. It carries out the reaction beta-D-fructose 1,6-bisphosphate = D-glyceraldehyde 3-phosphate + dihydroxyacetone phosphate. It functions in the pathway carbohydrate degradation; glycolysis; D-glyceraldehyde 3-phosphate and glycerone phosphate from D-glucose: step 4/4. Functionally, fructose-bisphosphate aldolase that plays a key role in glycolysis and gluconeogenesis. The polypeptide is Fructose-bisphosphate aldolase 3, cytoplasmic (Oryza sativa subsp. japonica (Rice)).